The following is a 628-amino-acid chain: DNA primase (628 aa).

A CHC2-type zinc finger spans residues 40-64 (CPFHEERSPSFSVAEDKQIFHCFGC). The region spanning 269-351 (NTVLLFEGFM…DLSIVSIPEK (83 aa)) is the Toprim domain. 3 residues coordinate Mg(2+): glutamate 275, aspartate 319, and aspartate 321.

Belongs to the DnaG primase family. In terms of assembly, monomer. Interacts with DnaB. Zn(2+) is required as a cofactor. Requires Mg(2+) as cofactor.

The catalysed reaction is ssDNA + n NTP = ssDNA/pppN(pN)n-1 hybrid + (n-1) diphosphate.. In terms of biological role, RNA polymerase that catalyzes the synthesis of short RNA molecules used as primers for DNA polymerase during DNA replication. This Enterococcus faecalis (strain ATCC 700802 / V583) protein is DNA primase.